The primary structure comprises 496 residues: Guanosine-5'-triphosphate,3'-diphosphate pyrophosphatase (496 aa).

It belongs to the GppA/Ppx family. GppA subfamily.

It catalyses the reaction guanosine 3'-diphosphate 5'-triphosphate + H2O = guanosine 3',5'-bis(diphosphate) + phosphate + H(+). Its pathway is purine metabolism; ppGpp biosynthesis; ppGpp from GTP: step 2/2. Functionally, catalyzes the conversion of pppGpp to ppGpp. Guanosine pentaphosphate (pppGpp) is a cytoplasmic signaling molecule which together with ppGpp controls the 'stringent response', an adaptive process that allows bacteria to respond to amino acid starvation, resulting in the coordinated regulation of numerous cellular activities. This chain is Guanosine-5'-triphosphate,3'-diphosphate pyrophosphatase, found in Aeromonas salmonicida (strain A449).